Reading from the N-terminus, the 57-residue chain is Small ribosomal subunit protein eS31 (57 aa).

Zn(2+) contacts are provided by Cys29, Cys32, Cys47, and Cys50. The C4-type zinc finger occupies Cys29–Cys50.

The protein belongs to the eukaryotic ribosomal protein eS31 family. As to quaternary structure, part of the 30S ribosomal subunit. The cofactor is Zn(2+).

The polypeptide is Small ribosomal subunit protein eS31 (Nitrosopumilus maritimus (strain SCM1)).